The chain runs to 193 residues: Ribonuclease HII (193 aa).

The 179-residue stretch at 15-193 (CIVAGIDEAG…PYHRRSFRCC (179 aa)) folds into the RNase H type-2 domain. A divalent metal cation contacts are provided by D21, E22, and D112.

Belongs to the RNase HII family. Mn(2+) serves as cofactor. It depends on Mg(2+) as a cofactor.

Its subcellular location is the cytoplasm. It catalyses the reaction Endonucleolytic cleavage to 5'-phosphomonoester.. Endonuclease that specifically degrades the RNA of RNA-DNA hybrids. This is Ribonuclease HII from Rickettsia conorii (strain ATCC VR-613 / Malish 7).